Here is a 227-residue protein sequence, read N- to C-terminus: Leucyl/phenylalanyl-tRNA--protein transferase (227 aa).

The protein belongs to the L/F-transferase family.

Its subcellular location is the cytoplasm. The enzyme catalyses N-terminal L-lysyl-[protein] + L-leucyl-tRNA(Leu) = N-terminal L-leucyl-L-lysyl-[protein] + tRNA(Leu) + H(+). The catalysed reaction is N-terminal L-arginyl-[protein] + L-leucyl-tRNA(Leu) = N-terminal L-leucyl-L-arginyl-[protein] + tRNA(Leu) + H(+). It catalyses the reaction L-phenylalanyl-tRNA(Phe) + an N-terminal L-alpha-aminoacyl-[protein] = an N-terminal L-phenylalanyl-L-alpha-aminoacyl-[protein] + tRNA(Phe). Functionally, functions in the N-end rule pathway of protein degradation where it conjugates Leu, Phe and, less efficiently, Met from aminoacyl-tRNAs to the N-termini of proteins containing an N-terminal arginine or lysine. This is Leucyl/phenylalanyl-tRNA--protein transferase from Afipia carboxidovorans (strain ATCC 49405 / DSM 1227 / KCTC 32145 / OM5) (Oligotropha carboxidovorans).